The sequence spans 231 residues: Cilia- and flagella-associated protein 299 (231 aa).

Its subcellular location is the cytoplasm. The protein resides in the nucleus. Functionally, may be involved in spermatogenesis. This is Cilia- and flagella-associated protein 299 from Bos taurus (Bovine).